Consider the following 237-residue polypeptide: NAD-dependent protein deacetylase (237 aa).

Residues 1-237 form the Deacetylase sirtuin-type domain; sequence MFTTSLRQAQ…LVETNRALQK (237 aa). NAD(+) is bound by residues Ala-18, Thr-22, Phe-29, Arg-30, Gln-95, Asp-98, and His-113. Phe-29 contributes to the nicotinamide binding site. Nicotinamide is bound at residue Asp-98. The active-site Proton acceptor is the His-113. Zn(2+) contacts are provided by Cys-121, Cys-124, Cys-140, and Cys-142. Positions 180, 181, 205, and 224 each coordinate NAD(+).

The protein belongs to the sirtuin family. Class U subfamily. Zn(2+) is required as a cofactor.

It is found in the cytoplasm. The catalysed reaction is N(6)-acetyl-L-lysyl-[protein] + NAD(+) + H2O = 2''-O-acetyl-ADP-D-ribose + nicotinamide + L-lysyl-[protein]. Functionally, NAD-dependent protein deacetylase which modulates the activities of several enzymes which are inactive in their acetylated form. This chain is NAD-dependent protein deacetylase, found in Shouchella clausii (strain KSM-K16) (Alkalihalobacillus clausii).